Here is a 267-residue protein sequence, read N- to C-terminus: 2-keto-3-deoxy-L-rhamnonate aldolase (267 aa).

His49 serves as the catalytic Proton acceptor. Residue Gln151 coordinates substrate. Glu153 serves as a coordination point for Mg(2+). Substrate is bound by residues Ala178 and Asp179. Residue Asp179 coordinates Mg(2+).

The protein belongs to the HpcH/HpaI aldolase family. KDR aldolase subfamily. In terms of assembly, homohexamer. Requires Mg(2+) as cofactor.

The enzyme catalyses 2-dehydro-3-deoxy-L-rhamnonate = (S)-lactaldehyde + pyruvate. Functionally, catalyzes the reversible retro-aldol cleavage of 2-keto-3-deoxy-L-rhamnonate (KDR) to pyruvate and lactaldehyde. This Klebsiella pneumoniae subsp. pneumoniae (strain ATCC 700721 / MGH 78578) protein is 2-keto-3-deoxy-L-rhamnonate aldolase.